The sequence spans 542 residues: Chaperonin GroEL (542 aa).

ATP is bound by residues Thr-29–Pro-32, Asp-86–Thr-90, Gly-413, Asn-476–Ala-478, and Asp-492. The tract at residues Pro-522–Met-542 is disordered.

The protein belongs to the chaperonin (HSP60) family. In terms of assembly, forms a cylinder of 14 subunits composed of two heptameric rings stacked back-to-back. Interacts with the co-chaperonin GroES.

The protein localises to the cytoplasm. It carries out the reaction ATP + H2O + a folded polypeptide = ADP + phosphate + an unfolded polypeptide.. Its function is as follows. Together with its co-chaperonin GroES, plays an essential role in assisting protein folding. The GroEL-GroES system forms a nano-cage that allows encapsulation of the non-native substrate proteins and provides a physical environment optimized to promote and accelerate protein folding. The protein is Chaperonin GroEL of Listeria monocytogenes serotype 4a (strain HCC23).